Consider the following 408-residue polypeptide: UDP-N-acetylglucosamine--dolichyl-phosphate N-acetylglucosaminephosphotransferase (408 aa).

The Lumenal portion of the chain corresponds to 1 to 10 (MWAFSELPMP). Residues 11–38 (LLINLIVSLLGFVATVTLIPAFRGHFIA) form a helical membrane-spanning segment. The Cytoplasmic segment spans residues 39–58 (ARLCGQDLNKTSRQQIPESQ). UDP-N-acetyl-alpha-D-glucosamine contacts are provided by residues 44–46 (QDL) and E56. Tunicamycin A1 is bound at residue L46. Residues 59-78 (GVISGAVFLIILFCFIPFPF) traverse the membrane as a helical segment. At 79–91 (LNCFVKEQCKAFP) the chain is on the lumenal side. The helical transmembrane segment at 92–118 (HHEFVALIGALLAICCMIFLGFADDVL) threads the bilayer. Position 119 (N119) interacts with tunicamycin A1. Over 119–121 (NLR) the chain is Cytoplasmic. Residues 122-143 (WRHKLLLPTAASLPLLMVYFTN) form a helical membrane-spanning segment. K125 lines the dolichyl phosphate pocket. Over 144 to 166 (FGNTTIVVPKPFRPILGLHLDLG) the chain is Lumenal. A glycan (N-linked (GlcNAc...) asparagine) is linked at N146. A helical transmembrane segment spans residues 167–186 (ILYYVYMGLLAVFCTNAINI). 178 to 186 (VFCTNAINI) is a binding site for dolichyl phosphate. N185 lines the tunicamycin A1 pocket. N185 lines the Mg(2+) pocket. Residues 187-192 (LAGING) lie on the Cytoplasmic side of the membrane. N191 is a binding site for UDP-N-acetyl-alpha-D-glucosamine. Residues 193–213 (LEAGQSLVISASIIVFNLVEL) traverse the membrane as a helical segment. The Lumenal segment spans residues 214-218 (EGDCR). The chain crosses the membrane as a helical span at residues 219–242 (DDHVFSLYFMIPFFFTTLGLLYHN). At 243-250 (WYPSRVFV) the chain is on the cytoplasmic side. A helical transmembrane segment spans residues 251–269 (GDTFCYFAGMTFAVVGILG). D252 lines the tunicamycin A1 pocket. D252 is a binding site for Mg(2+). Residues 270–271 (HF) are Lumenal-facing. A helical membrane pass occupies residues 272 to 293 (SKTMLLFFMPQVFNFLYSLPQL). The Cytoplasmic portion of the chain corresponds to 294-375 (LHIIPCPRHR…LLLKVLGPIH (82 aa)). UDP-N-acetyl-alpha-D-glucosamine is bound at residue 301–303 (RHR). A tunicamycin A1-binding site is contributed by R303. A helical membrane pass occupies residues 376 to 400 (ERNLTLLLLLLQILGSAITFSIRYQ). Residues 401 to 408 (LVRLFYDV) lie on the Lumenal side of the membrane.

Belongs to the glycosyltransferase 4 family. In terms of assembly, homodimer. Mg(2+) is required as a cofactor.

The protein localises to the endoplasmic reticulum membrane. The enzyme catalyses a di-trans,poly-cis-dolichyl phosphate + UDP-N-acetyl-alpha-D-glucosamine = an N-acetyl-alpha-D-glucosaminyl-diphospho-di-trans,poly-cis-dolichol + UMP. Its pathway is protein modification; protein glycosylation. With respect to regulation, inhibited by natural nucleoside antibiotic tunicamycin, which acts as a structural analog and competitor of UDP-GlcNAc. Activated by mannosylphosphoryldolichol and phospholipids such as phosphatidylglycerol and phosphatidylcholine. UDP-N-acetylglucosamine--dolichyl-phosphate N-acetylglucosaminephosphotransferase that operates in the biosynthetic pathway of dolichol-linked oligosaccharides, the glycan precursors employed in protein asparagine (N)-glycosylation. The assembly of dolichol-linked oligosaccharides begins on the cytosolic side of the endoplasmic reticulum membrane and finishes in its lumen. The sequential addition of sugars to dolichol pyrophosphate produces dolichol-linked oligosaccharides containing fourteen sugars, including two GlcNAcs, nine mannoses and three glucoses. Once assembled, the oligosaccharide is transferred from the lipid to nascent proteins by oligosaccharyltransferases. Catalyzes the initial step of dolichol-linked oligosaccharide biosynthesis, transfering GlcNAc-1-P from cytosolic UDP-GlcNAc onto the carrier lipid dolichyl phosphate (P-dolichol), yielding GlcNAc-P-P-dolichol embedded in the cytoplasmic leaflet of the endoplasmic reticulum membrane. This Homo sapiens (Human) protein is UDP-N-acetylglucosamine--dolichyl-phosphate N-acetylglucosaminephosphotransferase.